The following is a 737-amino-acid chain: Phosphoribosylformylglycinamidine synthase subunit PurL (737 aa).

Residue histidine 50 is part of the active site. ATP-binding residues include tyrosine 53 and lysine 92. Glutamate 94 lines the Mg(2+) pocket. Residues 95 to 98 (SHNH) and arginine 117 each bind substrate. The active-site Proton acceptor is histidine 96. A Mg(2+)-binding site is contributed by aspartate 118. Glutamine 241 is a binding site for substrate. Aspartate 269 is a binding site for Mg(2+). 313–315 (ESQ) contributes to the substrate binding site. Positions 495 and 532 each coordinate ATP. Asparagine 533 contacts Mg(2+). Residue serine 535 coordinates substrate.

It belongs to the FGAMS family. Monomer. Part of the FGAM synthase complex composed of 1 PurL, 1 PurQ and 2 PurS subunits.

It is found in the cytoplasm. The catalysed reaction is N(2)-formyl-N(1)-(5-phospho-beta-D-ribosyl)glycinamide + L-glutamine + ATP + H2O = 2-formamido-N(1)-(5-O-phospho-beta-D-ribosyl)acetamidine + L-glutamate + ADP + phosphate + H(+). The protein operates within purine metabolism; IMP biosynthesis via de novo pathway; 5-amino-1-(5-phospho-D-ribosyl)imidazole from N(2)-formyl-N(1)-(5-phospho-D-ribosyl)glycinamide: step 1/2. Functionally, part of the phosphoribosylformylglycinamidine synthase complex involved in the purines biosynthetic pathway. Catalyzes the ATP-dependent conversion of formylglycinamide ribonucleotide (FGAR) and glutamine to yield formylglycinamidine ribonucleotide (FGAM) and glutamate. The FGAM synthase complex is composed of three subunits. PurQ produces an ammonia molecule by converting glutamine to glutamate. PurL transfers the ammonia molecule to FGAR to form FGAM in an ATP-dependent manner. PurS interacts with PurQ and PurL and is thought to assist in the transfer of the ammonia molecule from PurQ to PurL. This is Phosphoribosylformylglycinamidine synthase subunit PurL from Bartonella bacilliformis (strain ATCC 35685 / KC583 / Herrer 020/F12,63).